The primary structure comprises 399 residues: Aspartate aminotransferase (399 aa).

Positions 42 and 179 each coordinate L-aspartate. Residue Lys-240 is modified to N6-(pyridoxal phosphate)lysine. Arg-372 lines the L-aspartate pocket.

The protein belongs to the class-I pyridoxal-phosphate-dependent aminotransferase family. As to quaternary structure, homodimer. It depends on pyridoxal 5'-phosphate as a cofactor.

Its subcellular location is the cytoplasm. It carries out the reaction L-aspartate + 2-oxoglutarate = oxaloacetate + L-glutamate. The chain is Aspartate aminotransferase (aspC) from Sulfurisphaera tokodaii (strain DSM 16993 / JCM 10545 / NBRC 100140 / 7) (Sulfolobus tokodaii).